A 182-amino-acid polypeptide reads, in one-letter code: MSRTRQVPSNTASSSHIQLLSPAVPQENHSTVRISGTLRLRAENDSIATDHIEGARPGRHIRWTEDVVDNEGLGKKSSKVCCIYHKPRPVGESSSESDDSTSSSSEPESDNDVDCRDSTGRAESHEQNAQDASQSPSNRSLNRGRTPSYTKRHAKRNGKRKPSPNAYEKMPKVKGQPRKTGM.

Residues 1 to 18 (MSRTRQVPSNTASSSHIQ) show a composition bias toward polar residues. 2 disordered regions span residues 1-30 (MSRT…ENHS) and 76-182 (KSSK…KTGM). A compositionally biased stretch (basic and acidic residues) spans 113-128 (VDCRDSTGRAESHEQN). Residues 129-149 (AQDASQSPSNRSLNRGRTPSY) are compositionally biased toward polar residues. The span at 150-162 (TKRHAKRNGKRKP) shows a compositional bias: basic residues.

The protein belongs to the YPI1 family.

The protein localises to the nucleus. Its function is as follows. Regulator of type 1 phosphatases which maintains protein phosphatase activity under strict control. The polypeptide is Type 1 phosphatases regulator ypi1 (ypi1) (Aspergillus fumigatus (strain CBS 144.89 / FGSC A1163 / CEA10) (Neosartorya fumigata)).